The chain runs to 570 residues: Proline--tRNA ligase (570 aa).

It belongs to the class-II aminoacyl-tRNA synthetase family. ProS type 1 subfamily. Homodimer.

It localises to the cytoplasm. It catalyses the reaction tRNA(Pro) + L-proline + ATP = L-prolyl-tRNA(Pro) + AMP + diphosphate. Functionally, catalyzes the attachment of proline to tRNA(Pro) in a two-step reaction: proline is first activated by ATP to form Pro-AMP and then transferred to the acceptor end of tRNA(Pro). As ProRS can inadvertently accommodate and process non-cognate amino acids such as alanine and cysteine, to avoid such errors it has two additional distinct editing activities against alanine. One activity is designated as 'pretransfer' editing and involves the tRNA(Pro)-independent hydrolysis of activated Ala-AMP. The other activity is designated 'posttransfer' editing and involves deacylation of mischarged Ala-tRNA(Pro). The misacylated Cys-tRNA(Pro) is not edited by ProRS. The chain is Proline--tRNA ligase from Pelotomaculum thermopropionicum (strain DSM 13744 / JCM 10971 / SI).